We begin with the raw amino-acid sequence, 40 residues long: Cytolysin SmT-1 (40 aa).

Positions 3-12 are plays an important role in the hemolytic activity; sequence ALAGTIIAGA. Residues 11 to 30 are N-terminal region; that stretch reads GASLGFQILDKVLGELGKVS.

This sequence belongs to the actinoporin family. Sea anemone subfamily. Octamer or nonamer in membranes. Monomer in the soluble state.

It localises to the secreted. The protein resides in the nematocyst. It is found in the target cell membrane. Pore-forming protein that forms cations-selective hydrophilic pores of around 1 nm and causes cardiac stimulation and cytolysis. Pore formation is a multi-step process that involves specific recognition of membrane sphingomyelin (but neither cholesterol nor phosphatidylcholine) using aromatic rich region and adjacent phosphocholine (POC) binding site, firm binding to the membrane (mainly driven by hydrophobic interactions) accompanied by the transfer of the N-terminal region to the lipid-water interface and finally pore formation after oligomerization of monomers. This toxin shows hemolytic activities. In Stichodactyla mertensii (Merten's carpet sea anemone), this protein is Cytolysin SmT-1.